The chain runs to 382 residues: Neuropeptide Y receptor type 1 (382 aa).

Residues 1–33 (MNSTLFSKVENHSIHYNASENSPLLAFENDDCH) are Extracellular-facing. Residues Asn2, Asn11, and Asn17 are each glycosylated (N-linked (GlcNAc...) asparagine). The helical transmembrane segment at 34–54 (LPLAVIFTLALAYGAVIILGV) threads the bilayer. Residues 55 to 75 (SGNLALIIIILKQKEMRNVTN) lie on the Cytoplasmic side of the membrane. A helical transmembrane segment spans residues 76–96 (ILIVNLSFSDLLVAVMCLPFT). At 97–115 (FVYTLMDHWVFGETMCKLN) the chain is on the extracellular side. The cysteines at positions 112 and 197 are disulfide-linked. The helical transmembrane segment at 116–136 (PFVQCVSITVSIFSLVLIAVE) threads the bilayer. Over 137 to 153 (RHQLIINPRGWRPNNRH) the chain is Cytoplasmic. The chain crosses the membrane as a helical span at residues 154–174 (AYIGITVIWVLAVASSLPFVI). At 175 to 210 (YQILTDEPFQNVSLAAFKDKYVCFDKFPSDSHRLSY) the chain is on the extracellular side. Residues 211 to 231 (TTLLLVLQYFGPLCFIFICYF) form a helical membrane-spanning segment. The Cytoplasmic portion of the chain corresponds to 232–259 (KIYIRLKRRNNMMDKIRDSKYRSSETKR). A helical transmembrane segment spans residues 260 to 280 (INIMLLSIVVAFAVCWLPLTI). The Extracellular segment spans residues 281–298 (FNTVFDWNHQIIATCNHN). A helical transmembrane segment spans residues 299-319 (LLFLLCHLTAMISTCVNPIFY). Over 320–382 (GFLNKNFQRD…KISMNDNEKV (63 aa)) the chain is Cytoplasmic. Cys337 carries S-palmitoyl cysteine lipidation. A phosphoserine mark is found at Ser367 and Ser375.

It belongs to the G-protein coupled receptor 1 family. As to expression, the alpha form is highly expressed in the brain, heart, kidney, spleen, skeletal muscle, and lung, whereas the beta receptor mRNA was not detected in these tissues. However, the beta form is expressed in mouse embryonic developmental stage (7 and 11 days), bone marrow cells and several hematopoietic cell lines.

The protein resides in the cell membrane. In terms of biological role, receptor for neuropeptide Y and peptide YY. The polypeptide is Neuropeptide Y receptor type 1 (Npy1r) (Mus musculus (Mouse)).